A 677-amino-acid polypeptide reads, in one-letter code: Transcription factor IIIB 90 kDa subunit (677 aa).

The TFIIB-type zinc-finger motif lies at 2–33; that stretch reads TGRVCRGCGGTDIELDAARGDAVCTACGSVLE. Positions 6, 9, 25, and 28 each coordinate Zn(2+). Tandem repeats lie at residues 91 to 172 and 185 to 269. Disordered regions lie at residues 340–368 and 385–413; these read KGGLASLAKDGSTEDTASSLCGEEDTEDE and LLGGAPGSSEAAGSPEWGGRPPALGSLLD. Residue T365 is modified to Phosphothreonine. S450 carries the phosphoserine modification. Disordered regions lie at residues 501 to 521 and 544 to 653; these read YKEHKPKKSCKRREPIQASTA and RGLS…EDGE. S553 carries the phosphoserine modification. Residues 640 to 653 are compositionally biased toward acidic residues; the sequence is EEADEEEPDEEDGE.

It belongs to the TFIIB family. TFIIIB comprises at least the TATA-binding protein (TBP) and the B-related factor 1 (BRF1/TFIIIB90). Interacts with BDP1. Interacts with MAF1.

The protein resides in the nucleus. Functionally, general activator of RNA polymerase which utilizes different TFIIIB complexes at structurally distinct promoters. The isoform 1 is involved in the transcription of tRNA, adenovirus VA1, 7SL and 5S RNA. Isoform 2 is required for transcription of the U6 promoter. The sequence is that of Transcription factor IIIB 90 kDa subunit (BRF1) from Homo sapiens (Human).